The sequence spans 245 residues: tRNA (guanine-N(1)-)-methyltransferase (245 aa).

Residues Gly-113 and 133–138 contribute to the S-adenosyl-L-methionine site; that span reads IGDYVL.

This sequence belongs to the RNA methyltransferase TrmD family. In terms of assembly, homodimer.

The protein localises to the cytoplasm. The catalysed reaction is guanosine(37) in tRNA + S-adenosyl-L-methionine = N(1)-methylguanosine(37) in tRNA + S-adenosyl-L-homocysteine + H(+). Its function is as follows. Specifically methylates guanosine-37 in various tRNAs. The chain is tRNA (guanine-N(1)-)-methyltransferase from Histophilus somni (strain 129Pt) (Haemophilus somnus).